The sequence spans 509 residues: ATP synthase subunit alpha (509 aa).

169–176 (GDRQTGKT) lines the ATP pocket.

Belongs to the ATPase alpha/beta chains family. As to quaternary structure, F-type ATPases have 2 components, CF(1) - the catalytic core - and CF(0) - the membrane proton channel. CF(1) has five subunits: alpha(3), beta(3), gamma(1), delta(1), epsilon(1). CF(0) has three main subunits: a(1), b(2) and c(9-12). The alpha and beta chains form an alternating ring which encloses part of the gamma chain. CF(1) is attached to CF(0) by a central stalk formed by the gamma and epsilon chains, while a peripheral stalk is formed by the delta and b chains.

It localises to the cell inner membrane. It catalyses the reaction ATP + H2O + 4 H(+)(in) = ADP + phosphate + 5 H(+)(out). Functionally, produces ATP from ADP in the presence of a proton gradient across the membrane. The alpha chain is a regulatory subunit. In Methylobacterium sp. (strain 4-46), this protein is ATP synthase subunit alpha.